The sequence spans 239 residues: Ribonuclease HII (239 aa).

In terms of domain architecture, RNase H type-2 spans K18–E231. Residues D24, E25, and D125 each coordinate a divalent metal cation.

It belongs to the RNase HII family. The cofactor is Mn(2+). Requires Mg(2+) as cofactor.

It localises to the cytoplasm. The enzyme catalyses Endonucleolytic cleavage to 5'-phosphomonoester.. In terms of biological role, endonuclease that specifically degrades the RNA of RNA-DNA hybrids. This Methanococcus maripaludis (strain C6 / ATCC BAA-1332) protein is Ribonuclease HII.